The primary structure comprises 74 residues: Serine rich endogenous peptide 16 (74 aa).

The N-terminal stretch at 1-31 is a signal peptide; that stretch reads MATKISHLVSLLLSLLLLLLFISSQVGFTEA. The tract at residues 29–74 is disordered; sequence TEAKRDERKKMSSPPIPSPLIPSPPIPPPPPRFYVPPSKSRRGKGP. Residues 42 to 62 are compositionally biased toward pro residues; the sequence is PPIPSPLIPSPPIPPPPPRFY. Residues 60-74 carry the SCOOP motif motif; it reads RFYVPPSKSRRGKGP. A SxS motif essential for MIK2 binding motif is present at residues 66-68; the sequence is SKS.

This sequence belongs to the serine rich endogenous peptide (SCOOP) phytocytokine family. Interacts with MIK2 (via extracellular leucine-rich repeat domain); this interaction triggers the formation of complex between MIK2 and the BAK1/SERK3 and SERK4 coreceptors, and subsequent BAK1 activation by phosphorylation.

The protein localises to the cell membrane. It is found in the secreted. It localises to the extracellular space. The protein resides in the apoplast. Brassicaceae-specific phytocytokine (plant endogenous peptide released into the apoplast) perceived by MIK2 in a BAK1/SERK3 and SERK4 coreceptors-dependent manner, that modulates various physiological and antimicrobial processes including growth prevention and reactive oxygen species (ROS) response regulation. This chain is Serine rich endogenous peptide 16, found in Arabidopsis thaliana (Mouse-ear cress).